Here is a 71-residue protein sequence, read N- to C-terminus: Cold shock-like protein CspB (71 aa).

A CSD domain is found at 7–67 (GLVKWFNADK…GAKGPAAANV (61 aa)).

The protein localises to the cytoplasm. This is Cold shock-like protein CspB (cspB) from Escherichia coli (strain K12).